A 308-amino-acid polypeptide reads, in one-letter code: Protoheme IX farnesyltransferase 2 (308 aa).

9 consecutive transmembrane segments (helical) span residues 20-40 (VTKPGIIMGNLIAVVGGFLLA), 47-67 (AVLMLATLVGLSLVVASGCAI), 92-114 (IPLKQVLGLGIALGVLGFGLLAW), 118-137 (LAALLFAAFGYLVYVGLYSL), 144-164 (VYGTLVGSLSGAVPPVVGYCA), 174-194 (LILLAMFSLWQMPHSYAIAIF), 218-238 (LHIVFYIALFALVSTLLPLAG), 240-260 (TGVGFMAVSCVTSFWWLLMAL), and 275-295 (QVFGFSILTIAILSLTMALDF).

The protein belongs to the UbiA prenyltransferase family. Protoheme IX farnesyltransferase subfamily.

It is found in the cell inner membrane. It carries out the reaction heme b + (2E,6E)-farnesyl diphosphate + H2O = Fe(II)-heme o + diphosphate. The protein operates within porphyrin-containing compound metabolism; heme O biosynthesis; heme O from protoheme: step 1/1. Its function is as follows. Converts heme B (protoheme IX) to heme O by substitution of the vinyl group on carbon 2 of heme B porphyrin ring with a hydroxyethyl farnesyl side group. The protein is Protoheme IX farnesyltransferase 2 of Shewanella loihica (strain ATCC BAA-1088 / PV-4).